Reading from the N-terminus, the 300-residue chain is MTCASNSNSFLNKAIEFPSPAKINLFLHIVGQREDGYHNLETLFQFIDHSDTLTLTATETPDIELLTPIDGVNNDDNLIVKAARLLKNRSNTDLGVKISINKILPMGGGLGGGSSNAATVLVALNLLWQCEFSLSELSSLGLSLGADVPIFIHGFSAFAQGVGDHLTAIKPQESWYLITKPECSISTKEIFTAVDLPRNTKKLDPTALNTSDFVTESFHNDCQTLVIKQYPEVAKLLAWLVEYAPSRMTGTGACVFTQFSSYQEARSLQAKLPKGISSFVAQGLNKSPLCSVIAKLSLSE.

K22 is a catalytic residue. 105-115 (PMGGGLGGGSS) contributes to the ATP binding site. The active site involves D147.

The protein belongs to the GHMP kinase family. IspE subfamily.

The catalysed reaction is 4-CDP-2-C-methyl-D-erythritol + ATP = 4-CDP-2-C-methyl-D-erythritol 2-phosphate + ADP + H(+). It participates in isoprenoid biosynthesis; isopentenyl diphosphate biosynthesis via DXP pathway; isopentenyl diphosphate from 1-deoxy-D-xylulose 5-phosphate: step 3/6. In terms of biological role, catalyzes the phosphorylation of the position 2 hydroxy group of 4-diphosphocytidyl-2C-methyl-D-erythritol. This chain is 4-diphosphocytidyl-2-C-methyl-D-erythritol kinase, found in Colwellia psychrerythraea (strain 34H / ATCC BAA-681) (Vibrio psychroerythus).